A 462-amino-acid chain; its full sequence is MAKNDKINFSTPSGFPEFLPSEKRLELYLLDTIRRVYESYGFTPIETPAVERLEVLQAKGNQGDNIIYGLEPILPPNRQAEKDKSGDTGSEARALKFDQTVPLAAYIARHLNDLTFPFARYQMDVVFRGERAKDGRFRQFRQCDIDVVGREKLSLLYDAQMPAIITEIFEAVNIGDFVIRINNRKVLTGFFQSLNISETQIKSCISIIDNLEKIGEAKVKLELEKEGINPEQTQKIIDFVKIDGSVDDVLDKLKHLSQTLPESEQFNLGVSELETVITGVRNLGVPDKRFCIDLAIARGLNYYTGTVYETTLIGHEALGSICSGGRYEELVGTFIGEKMPGVGISIGLTRLISRLLKAGILNTLPPTPAQVVVVNMQDELMPTYLKVSQQLRQAGLNVITNFEKRQLGKQFQAADKQGIRFCVIIGADEAAAQKSSLKDLQSGEQVEVALADLAEEIKRRLT.

Belongs to the class-II aminoacyl-tRNA synthetase family. As to quaternary structure, homodimer.

The protein localises to the cytoplasm. The enzyme catalyses tRNA(His) + L-histidine + ATP = L-histidyl-tRNA(His) + AMP + diphosphate + H(+). The sequence is that of Histidine--tRNA ligase (hisS) from Nostoc sp. (strain PCC 7120 / SAG 25.82 / UTEX 2576).